We begin with the raw amino-acid sequence, 69 residues long: Neurotoxin Cex7 (69 aa).

A signal peptide is located at residue alanine 1. Positions 2-67 (REGYLVSKST…TYPIPGKSCG (66 aa)) constitute an LCN-type CS-alpha/beta domain. 4 cysteine pairs are disulfide-bonded: cysteine 13–cysteine 66, cysteine 17–cysteine 42, cysteine 26–cysteine 47, and cysteine 30–cysteine 49. Cysteine 66 bears the Cysteine amide mark. A propeptide spanning residues 67–69 (GKK) is cleaved from the precursor.

It belongs to the long (4 C-C) scorpion toxin superfamily. Sodium channel inhibitor family. Beta subfamily. In terms of tissue distribution, expressed by the venom gland.

It is found in the secreted. Its function is as follows. Beta toxins bind voltage-independently at site-4 of sodium channels (Nav) and shift the voltage of activation toward more negative potentials thereby affecting sodium channel activation and promoting spontaneous and repetitive firing. The polypeptide is Neurotoxin Cex7 (Centruroides exilicauda (Bark scorpion)).